Reading from the N-terminus, the 438-residue chain is Ribosomal protein uS12 methylthiotransferase RimO (438 aa).

The region spanning 6-118 (KQLCLISLGC…IDILIAKKQN (113 aa)) is the MTTase N-terminal domain. Residues Cys15, Cys49, Cys81, Cys150, Cys154, and Cys157 each coordinate [4Fe-4S] cluster. Positions 136-364 (TGSSVHAYVK…NKIALKHQHN (229 aa)) constitute a Radical SAM core domain.

It belongs to the methylthiotransferase family. RimO subfamily. Requires [4Fe-4S] cluster as cofactor.

It is found in the cytoplasm. The catalysed reaction is L-aspartate(89)-[ribosomal protein uS12]-hydrogen + (sulfur carrier)-SH + AH2 + 2 S-adenosyl-L-methionine = 3-methylsulfanyl-L-aspartate(89)-[ribosomal protein uS12]-hydrogen + (sulfur carrier)-H + 5'-deoxyadenosine + L-methionine + A + S-adenosyl-L-homocysteine + 2 H(+). Functionally, catalyzes the methylthiolation of an aspartic acid residue of ribosomal protein uS12. The polypeptide is Ribosomal protein uS12 methylthiotransferase RimO (Helicobacter acinonychis (strain Sheeba)).